A 547-amino-acid chain; its full sequence is MSIYPMYTRKITHWFARRSFQNRIFLLILFTSTIVMLAMSWYLTDITEERLHYQVGQRALIQAMQISAMPELVEAVQKRDLARIKALIDPMRSFSDATYITVGDASGQRLYHVNPDEIGKSMEGGDSDEALINAKSYVSVRKGSLGSSLRGKSPIQDATGKVIGIVSVGYTIEQLENWLSLQISSLLIPMAIMLLLLLFCARRFSLHIKKQMLNMEPQQLSQLLIQQSVLFESVFEGLIAIDSDYKITAINQTARRLLNLSQPEPTLIGKRISSVISQEVFFYDAPQTNKKDEIVTFNQIKVIASRMAVILNNEPQGWVISFRSKDDINTLSLQLSQVQQYADNLRAVQHEHRNLISTIAGLLFLKRYNQALELIQQQSESHQKVIDFIARNFQDNHLAGLLIGKYYRAKELGLELIFDPACFVDRLPTALSHNEWISIVGNLLDNAYNASLRQPQGSKQIECLINSDGQEVIIEIADQGCGIDEALRDRIFERGVTSSASKDHGIGLWLVRSYVEQAGGSIVVENNIPFGTIFTLYIPLTRDEHHG.

Residues 1 to 23 (MSIYPMYTRKITHWFARRSFQNR) are Cytoplasmic-facing. A helical membrane pass occupies residues 24-44 (IFLLILFTSTIVMLAMSWYLT). At 45-180 (DITEERLHYQ…TIEQLENWLS (136 aa)) the chain is on the periplasmic side. Citrate-binding residues include Arg109, His112, Arg150, and Lys152. The helical transmembrane segment at 181–201 (LQISSLLIPMAIMLLLLLFCA) threads the bilayer. Topologically, residues 202 to 547 (RRFSLHIKKQ…IPLTRDEHHG (346 aa)) are cytoplasmic. Positions 225-264 (IQQSVLFESVFEGLIAIDSDYKITAINQTARRLLNLSQPE) constitute a PAS domain. Positions 347-542 (AVQHEHRNLI…IFTLYIPLTR (196 aa)) constitute a Histidine kinase domain. The residue at position 350 (His350) is a Phosphohistidine; by autocatalysis.

Homodimer. In vitro CitB and the CitA kinase domain form a complex, formation of which is enhanced by ATP. In terms of processing, autophosphorylated.

The protein resides in the cell inner membrane. The catalysed reaction is ATP + protein L-histidine = ADP + protein N-phospho-L-histidine.. Member of the two-component regulatory system CitA/CitB. Probably activates CitB by phosphorylation. The periplasmic domain binds H-citrate(2-), which is essential for induction of the citrate-fermentation genes. The protein is Sensor histidine kinase CitA (citA) of Klebsiella pneumoniae.